Reading from the N-terminus, the 275-residue chain is 4-hydroxy-3-methylbut-2-enyl diphosphate reductase (275 aa).

A [4Fe-4S] cluster-binding site is contributed by Cys12. (2E)-4-hydroxy-3-methylbut-2-enyl diphosphate-binding residues include His40 and His70. 2 residues coordinate dimethylallyl diphosphate: His40 and His70. Residues His40 and His70 each contribute to the isopentenyl diphosphate site. Cys92 provides a ligand contact to [4Fe-4S] cluster. (2E)-4-hydroxy-3-methylbut-2-enyl diphosphate is bound at residue His119. His119 is a binding site for dimethylallyl diphosphate. His119 lines the isopentenyl diphosphate pocket. The active-site Proton donor is the Glu121. Residue Thr151 coordinates (2E)-4-hydroxy-3-methylbut-2-enyl diphosphate. Position 181 (Cys181) interacts with [4Fe-4S] cluster. (2E)-4-hydroxy-3-methylbut-2-enyl diphosphate-binding residues include Ser209, Ser210, Asn211, and Ser251. Positions 209, 210, 211, and 251 each coordinate dimethylallyl diphosphate. Positions 209, 210, 211, and 251 each coordinate isopentenyl diphosphate.

It belongs to the IspH family. [4Fe-4S] cluster is required as a cofactor.

The catalysed reaction is isopentenyl diphosphate + 2 oxidized [2Fe-2S]-[ferredoxin] + H2O = (2E)-4-hydroxy-3-methylbut-2-enyl diphosphate + 2 reduced [2Fe-2S]-[ferredoxin] + 2 H(+). It carries out the reaction dimethylallyl diphosphate + 2 oxidized [2Fe-2S]-[ferredoxin] + H2O = (2E)-4-hydroxy-3-methylbut-2-enyl diphosphate + 2 reduced [2Fe-2S]-[ferredoxin] + 2 H(+). It participates in isoprenoid biosynthesis; dimethylallyl diphosphate biosynthesis; dimethylallyl diphosphate from (2E)-4-hydroxy-3-methylbutenyl diphosphate: step 1/1. It functions in the pathway isoprenoid biosynthesis; isopentenyl diphosphate biosynthesis via DXP pathway; isopentenyl diphosphate from 1-deoxy-D-xylulose 5-phosphate: step 6/6. Functionally, catalyzes the conversion of 1-hydroxy-2-methyl-2-(E)-butenyl 4-diphosphate (HMBPP) into a mixture of isopentenyl diphosphate (IPP) and dimethylallyl diphosphate (DMAPP). Acts in the terminal step of the DOXP/MEP pathway for isoprenoid precursor biosynthesis. The polypeptide is 4-hydroxy-3-methylbut-2-enyl diphosphate reductase (Thermotoga petrophila (strain ATCC BAA-488 / DSM 13995 / JCM 10881 / RKU-1)).